The chain runs to 313 residues: tRNA dimethylallyltransferase (313 aa).

10-17 (GPTASGKT) contributes to the ATP binding site. Substrate is bound at residue 12 to 17 (TASGKT). 3 interaction with substrate tRNA regions span residues 35–38 (DSAM), 159–163 (QRIQR), and 240–245 (RCVGYR).

Belongs to the IPP transferase family. As to quaternary structure, monomer. The cofactor is Mg(2+).

The enzyme catalyses adenosine(37) in tRNA + dimethylallyl diphosphate = N(6)-dimethylallyladenosine(37) in tRNA + diphosphate. Functionally, catalyzes the transfer of a dimethylallyl group onto the adenine at position 37 in tRNAs that read codons beginning with uridine, leading to the formation of N6-(dimethylallyl)adenosine (i(6)A). The polypeptide is tRNA dimethylallyltransferase (Legionella pneumophila (strain Paris)).